The chain runs to 513 residues: 2,3-bisphosphoglycerate-independent phosphoglycerate mutase (513 aa).

Mn(2+) contacts are provided by aspartate 13 and serine 63. Serine 63 (phosphoserine intermediate) is an active-site residue. Residues histidine 124, 154–155 (RD), arginine 186, arginine 192, 262–265 (RADR), and lysine 335 each bind substrate. Mn(2+) is bound by residues aspartate 402, histidine 406, aspartate 443, histidine 444, and histidine 462.

This sequence belongs to the BPG-independent phosphoglycerate mutase family. As to quaternary structure, monomer. Mn(2+) is required as a cofactor.

The enzyme catalyses (2R)-2-phosphoglycerate = (2R)-3-phosphoglycerate. Its pathway is carbohydrate degradation; glycolysis; pyruvate from D-glyceraldehyde 3-phosphate: step 3/5. Its function is as follows. Catalyzes the interconversion of 2-phosphoglycerate and 3-phosphoglycerate. The polypeptide is 2,3-bisphosphoglycerate-independent phosphoglycerate mutase (Shewanella frigidimarina (strain NCIMB 400)).